Reading from the N-terminus, the 5162-residue chain is Linear gramicidin synthase subunit B (5162 aa).

Carrier domains follow at residues 963-1038, 2027-2101, 3541-3616, and 4601-4675; these read APRN…QALR, EPQS…VVLE, APRN…GAIG, and AATS…GQST. An O-(pantetheine 4'-phosphoryl)serine mark is found at Ser998, Ser2062, Ser3576, and Ser4636.

The protein belongs to the ATP-dependent AMP-binding enzyme family. As to quaternary structure, large multienzyme complex composed of 4 subunits; LgrA, LgrB, LgrC and LgrD. Pantetheine 4'-phosphate serves as cofactor.

In terms of biological role, activates the 3rd to 6th amino acids (Ala, D-Leu, Ala and D-Val) in linear gramicidin and catalyzes the formation of the peptide bond between them. This enzyme is also responsible for the epimerization of the 4th (D-Leu) and the 6th (D-Val) amino acids. The sequence is that of Linear gramicidin synthase subunit B (lgrB) from Brevibacillus parabrevis.